A 59-amino-acid chain; its full sequence is Large ribosomal subunit protein bL32c (59 aa).

Positions 37–59 (SRSFSSGNEHPKPKGFSGQQTNK) are disordered.

This sequence belongs to the bacterial ribosomal protein bL32 family.

The protein resides in the plastid. The protein localises to the chloroplast. This is Large ribosomal subunit protein bL32c from Hordeum vulgare (Barley).